The primary structure comprises 420 residues: Exodeoxyribonuclease 7 large subunit (420 aa).

It belongs to the XseA family. Heterooligomer composed of large and small subunits.

The protein localises to the cytoplasm. The catalysed reaction is Exonucleolytic cleavage in either 5'- to 3'- or 3'- to 5'-direction to yield nucleoside 5'-phosphates.. Bidirectionally degrades single-stranded DNA into large acid-insoluble oligonucleotides, which are then degraded further into small acid-soluble oligonucleotides. The chain is Exodeoxyribonuclease 7 large subunit from Helicobacter pylori (strain ATCC 700392 / 26695) (Campylobacter pylori).